Here is a 394-residue protein sequence, read N- to C-terminus: uncharacterized protein (394 aa).

12 helical membrane-spanning segments follow: residues 13–33, 35–55, 73–95, 110–130, 152–172, 179–198, 216–236, 241–261, 267–287, 293–313, 340–360, and 372–392; these read LITT…TTMI, MAPT…VLPT, TTMT…TLTV, ALTV…HMVL, IHMV…PTVL, LMVL…TLTV, VLLA…TVLP, VLMV…HMVL, VLMV…PTVL, VLMV…TLTV, MMTL…VTTI, and ILLC…YVSA.

Its subcellular location is the membrane. This is an uncharacterized protein from Saccharomyces cerevisiae (strain ATCC 204508 / S288c) (Baker's yeast).